Consider the following 219-residue polypeptide: Response regulator ArlR (219 aa).

The region spanning 3–116 (NILIVEDEQN…ELFARIRAVL (114 aa)) is the Response regulatory domain. Asp-52 carries the 4-aspartylphosphate modification. The segment at residues 122–219 (KDIIDINGIK…TVRGVGYVIR (98 aa)) is a DNA-binding region (ompR/PhoB-type).

In terms of processing, phosphorylated by ArlS.

It localises to the cytoplasm. Member of the two-component regulatory system ArlS/ArlR. This chain is Response regulator ArlR (arlR), found in Staphylococcus haemolyticus (strain JCSC1435).